Reading from the N-terminus, the 259-residue chain is Snake venom serine proteinase 2 (259 aa).

The first 18 residues, M1–A18, serve as a signal peptide directing secretion. A propeptide spanning residues Q19 to L24 is cleaved from the precursor. In terms of domain architecture, Peptidase S1 spans I25–A250. 6 cysteine pairs are disulfide-bonded: C31-C162, C49-C65, C97-C257, C141-C211, C173-C190, and C201-C226. Active-site charge relay system residues include H64 and D109. The Charge relay system role is filled by S205.

Belongs to the peptidase S1 family. Snake venom subfamily. In terms of assembly, monomer. As to expression, expressed by the venom gland.

The protein resides in the secreted. In terms of biological role, snake venom serine protease that may act in the hemostasis system of the prey. The protein is Snake venom serine proteinase 2 of Crotalus adamanteus (Eastern diamondback rattlesnake).